The following is a 449-amino-acid chain: Cortexillin-2 (449 aa).

Residues 1-231 (MTDLHKEWEK…ILYTSLFFHA (231 aa)) form an actin-binding region. Calponin-homology (CH) domains lie at 10-119 (KVQE…RKYR) and 128-233 (KSSE…HAYR). 2 coiled-coil regions span residues 232–364 (YRAK…AEGL) and 408–441 (QFEEQAKRLGSKVENENISLEKYLSLKEEELKSA).

Belongs to the cortexillin family. Homodimer; parallel.

It is found in the cytoplasm. The protein resides in the cytoskeleton. In terms of biological role, actin-bundling protein. When linked to F-actin the actin filaments form preferentially anti-parallel bundles that associate into meshworks. Plays a major role in cytokinesis. The sequence is that of Cortexillin-2 (ctxB) from Heterostelium pallidum (strain ATCC 26659 / Pp 5 / PN500) (Cellular slime mold).